The primary structure comprises 878 residues: Bifunctional heparan sulfate N-deacetylase/N-sulfotransferase 1 (878 aa).

Residues 1–17 (MSLSLKTRRFGRPVRPQ) are Cytoplasmic-facing. The sufficient for localization to Golgi membrane stretch occupies residues 1-169 (MSLSLKTRRF…VEYGVGIIGF (169 aa)). The helical; Signal-anchor for type II membrane protein transmembrane segment at 18–38 (LVLLLLFALCLLSVFISAYYL) threads the bilayer. Topologically, residues 39–878 (YGWKRGLEPS…WLREELQNTR (840 aa)) are lumenal. The segment at 40-594 (GWKRGLEPSG…KRHKDIWSKE (555 aa)) is heparan sulfate N-deacetylase 1. Residues N231, N347, and N397 are each glycosylated (N-linked (GlcNAc...) asparagine). Residues 595 to 878 (KTCDRFPKLL…WLREELQNTR (284 aa)) form a heparan sulfate N-sulfotransferase 1 region. The active-site For sulfotransferase activity is K610. Position 610 to 614 (610 to 614 (KTGTT)) interacts with adenosine 3',5'-bisphosphate. An N-linked (GlcNAc...) asparagine glycan is attached at N663. Adenosine 3',5'-bisphosphate is bound by residues S708 and W813. C814 and C824 are oxidised to a cystine. 829–833 (KGRKY) contributes to the adenosine 3',5'-bisphosphate binding site.

Belongs to the sulfotransferase 1 family. NDST subfamily. Monomer.

It localises to the golgi apparatus membrane. Its subcellular location is the golgi apparatus. The protein localises to the trans-Golgi network membrane. The enzyme catalyses alpha-D-glucosaminyl-[heparan sulfate](n) + 3'-phosphoadenylyl sulfate = N-sulfo-alpha-D-glucosaminyl-[heparan sulfate](n) + adenosine 3',5'-bisphosphate + 2 H(+). The protein operates within glycan metabolism; heparan sulfate biosynthesis. It functions in the pathway glycan metabolism; heparin biosynthesis. Functionally, essential bifunctional enzyme that catalyzes both the N-deacetylation and the N-sulfation of glucosamine (GlcNAc) of the glycosaminoglycan in heparan sulfate. Modifies the GlcNAc-GlcA disaccharide repeating sugar backbone to make N-sulfated heparosan, a prerequisite substrate for later modifications in heparin biosynthesis. Plays a role in determining the extent and pattern of sulfation of heparan sulfate. This is Bifunctional heparan sulfate N-deacetylase/N-sulfotransferase 1 (ndst1) from Xenopus laevis (African clawed frog).